Reading from the N-terminus, the 435-residue chain is N-lysine methyltransferase SMYD2-A (435 aa).

The SET domain occupies 7–241 (EGTERFLSPG…PEEEIFNSYI (235 aa)). An S-adenosyl-L-methionine-binding site is contributed by 17–19 (KGR). Zn(2+) contacts are provided by cysteine 52, cysteine 55, cysteine 65, cysteine 68, cysteine 74, cysteine 78, histidine 86, and cysteine 90. The MYND-type zinc-finger motif lies at 52-90 (CECCFTRKEGLSKCGKCKQAYYCNVECQRGDWPMHKLEC). Residues histidine 137, 206 to 207 (NH), and 258 to 260 (YFF) each bind S-adenosyl-L-methionine.

It belongs to the class V-like SAM-binding methyltransferase superfamily.

Its subcellular location is the cytoplasm. It is found in the cytosol. The protein localises to the nucleus. It carries out the reaction L-lysyl(4)-[histone H3] + 3 S-adenosyl-L-methionine = N(6),N(6),N(6)-trimethyl-L-lysyl(4)-[histone H3] + 3 S-adenosyl-L-homocysteine + 3 H(+). It catalyses the reaction L-lysyl-[protein] + S-adenosyl-L-methionine = N(6)-methyl-L-lysyl-[protein] + S-adenosyl-L-homocysteine + H(+). Protein-lysine N-methyltransferase that methylates both histones and non-histone proteins, including p53/TP53 and RB1. Specifically trimethylates histone H3 'Lys-4' (H3K4me3) in vivo. The activity requires interaction with HSP90alpha. Shows even higher methyltransferase activity on p53/TP53. Monomethylates 'Lys-370' of p53/TP53, leading to decreased DNA-binding activity and subsequent transcriptional regulation activity of p53/TP53. Monomethylates RB1 at 'Lys-860'. This is N-lysine methyltransferase SMYD2-A (smyd2a) from Danio rerio (Zebrafish).